We begin with the raw amino-acid sequence, 352 residues long: Phospho-N-acetylmuramoyl-pentapeptide-transferase (352 aa).

10 helical membrane-spanning segments follow: residues 10-30, 67-87, 88-108, 129-149, 159-179, 191-211, 227-247, 255-275, 280-300, and 329-349; these read YMFF…ALFL, TMGG…CADL, NNFY…IGLV, LLSQ…MGIN, YALF…IISS, GLAT…LYLS, GLGE…GFLW, VFMG…LGIV, ILLL…ILQV, and KIIV…LISI.

The protein belongs to the glycosyltransferase 4 family. MraY subfamily. It depends on Mg(2+) as a cofactor.

The protein localises to the cell inner membrane. The enzyme catalyses UDP-N-acetyl-alpha-D-muramoyl-L-alanyl-gamma-D-glutamyl-meso-2,6-diaminopimeloyl-D-alanyl-D-alanine + di-trans,octa-cis-undecaprenyl phosphate = di-trans,octa-cis-undecaprenyl diphospho-N-acetyl-alpha-D-muramoyl-L-alanyl-D-glutamyl-meso-2,6-diaminopimeloyl-D-alanyl-D-alanine + UMP. It participates in cell wall biogenesis; peptidoglycan biosynthesis. Functionally, catalyzes the initial step of the lipid cycle reactions in the biosynthesis of the cell wall peptidoglycan: transfers peptidoglycan precursor phospho-MurNAc-pentapeptide from UDP-MurNAc-pentapeptide onto the lipid carrier undecaprenyl phosphate, yielding undecaprenyl-pyrophosphoryl-MurNAc-pentapeptide, known as lipid I. The polypeptide is Phospho-N-acetylmuramoyl-pentapeptide-transferase (Campylobacter lari (strain RM2100 / D67 / ATCC BAA-1060)).